Here is a 159-residue protein sequence, read N- to C-terminus: UPF0587 protein v1g245604 (159 aa).

C33, C36, C67, and C70 together coordinate Zn(2+).

This sequence belongs to the UPF0587 family.

The protein is UPF0587 protein v1g245604 of Nematostella vectensis (Starlet sea anemone).